The sequence spans 217 residues: Probable transaldolase (217 aa).

The active-site Schiff-base intermediate with substrate is lysine 85.

It belongs to the transaldolase family. Type 3B subfamily.

The protein resides in the cytoplasm. The enzyme catalyses D-sedoheptulose 7-phosphate + D-glyceraldehyde 3-phosphate = D-erythrose 4-phosphate + beta-D-fructose 6-phosphate. It functions in the pathway carbohydrate degradation; pentose phosphate pathway; D-glyceraldehyde 3-phosphate and beta-D-fructose 6-phosphate from D-ribose 5-phosphate and D-xylulose 5-phosphate (non-oxidative stage): step 2/3. In terms of biological role, transaldolase is important for the balance of metabolites in the pentose-phosphate pathway. The polypeptide is Probable transaldolase (Agathobacter rectalis (strain ATCC 33656 / DSM 3377 / JCM 17463 / KCTC 5835 / VPI 0990) (Eubacterium rectale)).